A 440-amino-acid chain; its full sequence is Alpha-methylserine aldolase (440 aa).

Position 255 is an N6-(pyridoxal phosphate)lysine (Lys255).

It belongs to the SHMT family. Alpha-methylserine aldolase subfamily. In terms of assembly, homodimer. Pyridoxal 5'-phosphate serves as cofactor.

It catalyses the reaction 2-methyl-L-serine = formaldehyde + L-alanine. In terms of biological role, catalyzes the reversible interconversion of alpha-methyl-L-serine to L-alanine and formaldehyde. This is Alpha-methylserine aldolase from Variovorax paradoxus.